Reading from the N-terminus, the 188-residue chain is Elongation factor P (188 aa).

Belongs to the elongation factor P family.

The protein resides in the cytoplasm. It participates in protein biosynthesis; polypeptide chain elongation. Involved in peptide bond synthesis. Stimulates efficient translation and peptide-bond synthesis on native or reconstituted 70S ribosomes in vitro. Probably functions indirectly by altering the affinity of the ribosome for aminoacyl-tRNA, thus increasing their reactivity as acceptors for peptidyl transferase. The polypeptide is Elongation factor P (Rickettsia massiliae (strain Mtu5)).